We begin with the raw amino-acid sequence, 78 residues long: uncharacterized protein (78 aa).

The first 27 residues, Met-1–Ala-27, serve as a signal peptide directing secretion.

This is an uncharacterized protein from Dryophytes versicolor (chameleon treefrog).